A 285-amino-acid chain; its full sequence is Bifunctional protein FolD (285 aa).

Residues 165-167, serine 190, and isoleucine 231 each bind NADP(+); that span reads GRS.

It belongs to the tetrahydrofolate dehydrogenase/cyclohydrolase family. As to quaternary structure, homodimer.

It carries out the reaction (6R)-5,10-methylene-5,6,7,8-tetrahydrofolate + NADP(+) = (6R)-5,10-methenyltetrahydrofolate + NADPH. The enzyme catalyses (6R)-5,10-methenyltetrahydrofolate + H2O = (6R)-10-formyltetrahydrofolate + H(+). Its pathway is one-carbon metabolism; tetrahydrofolate interconversion. Functionally, catalyzes the oxidation of 5,10-methylenetetrahydrofolate to 5,10-methenyltetrahydrofolate and then the hydrolysis of 5,10-methenyltetrahydrofolate to 10-formyltetrahydrofolate. The chain is Bifunctional protein FolD from Acetivibrio thermocellus (strain ATCC 27405 / DSM 1237 / JCM 9322 / NBRC 103400 / NCIMB 10682 / NRRL B-4536 / VPI 7372) (Clostridium thermocellum).